The sequence spans 427 residues: MWLYYLQVVMDMRVYVEGYGCVLNTADTEIIKNSLKKHGFEVVNNLEEADIAIINTCVVRLETENRMIYRINELKNLGKEVVVAGCLPKALKNKVKGFLHIYPREAHKAGEILKNYVEKHYRMPYIEEDINKTLYKKLDYLKPSLITPLPICEGCIGNCSYCIVKIARGGLISYPREKIVNKAKELINKGAKCLLITAQDTACYGFDIGDNLANLLNELTQIKGEFIMRVGMMHAKNAELILDELIEVYQNEKVGKFLHLPLQSGDDEILKRMKRGYTVDEFKDIVNEFRRKIKNLCFTTDIIVGFPGETEEQFQNTLEVLRELKPDYIHGAKYSQRKGTEAAKMKQIDTKIRKRRSEILDKLRRELSYLNNKKYIGKAMKVLVLDEGKGYTDNFKVVKFEGGEVGEFRKVKITDAKTFGLKGELIL.

Residues 12–118 (MRVYVEGYGC…AGEILKNYVE (107 aa)) enclose the MTTase N-terminal domain. Cys-21, Cys-57, Cys-86, Cys-155, Cys-159, and Cys-162 together coordinate [4Fe-4S] cluster. The 230-residue stretch at 141–370 (LKPSLITPLP…DKLRRELSYL (230 aa)) folds into the Radical SAM core domain. Positions 373-427 (KKYIGKAMKVLVLDEGKGYTDNFKVVKFEGGEVGEFRKVKITDAKTFGLKGELIL) constitute a TRAM domain.

This sequence belongs to the methylthiotransferase family. CDKAL1 subfamily. [4Fe-4S] cluster is required as a cofactor.

It carries out the reaction N(6)-L-threonylcarbamoyladenosine(37) in tRNA + (sulfur carrier)-SH + AH2 + 2 S-adenosyl-L-methionine = 2-methylsulfanyl-N(6)-L-threonylcarbamoyladenosine(37) in tRNA + (sulfur carrier)-H + 5'-deoxyadenosine + L-methionine + A + S-adenosyl-L-homocysteine + 2 H(+). In terms of biological role, catalyzes the methylthiolation of N6-threonylcarbamoyladenosine (t(6)A), leading to the formation of 2-methylthio-N6-threonylcarbamoyladenosine (ms(2)t(6)A) at position 37 in tRNAs that read codons beginning with adenine. The chain is Probable threonylcarbamoyladenosine tRNA methylthiotransferase from Methanocaldococcus jannaschii (strain ATCC 43067 / DSM 2661 / JAL-1 / JCM 10045 / NBRC 100440) (Methanococcus jannaschii).